Reading from the N-terminus, the 170-residue chain is Photosystem II extrinsic protein V (170 aa).

An N-terminal signal peptide occupies residues 1-33; it reads MASFFSTLRRSLNRLLIALPVLLGLMISTPAQA. Cys-70, Cys-73, His-74, and His-125 together coordinate heme c.

This sequence belongs to the cytochrome c family. PsbV subfamily. As to quaternary structure, PSII is composed of 1 copy each of membrane proteins PsbA, PsbB, PsbC, PsbD, PsbE, PsbF, PsbH, PsbI, PsbJ, PsbK, PsbL, PsbM, PsbT, PsbX, PsbY, PsbZ, Psb30/Ycf12, peripheral proteins PsbO, CyanoQ (PsbQ), PsbU, PsbV and a large number of cofactors. It forms dimeric complexes. The cofactor is heme c.

The protein resides in the cellular thylakoid membrane. Its function is as follows. One of the extrinsic, lumenal subunits of photosystem II (PSII). PSII is a light-driven water plastoquinone oxidoreductase, using light energy to abstract electrons from H(2)O, generating a proton gradient subsequently used for ATP formation. The extrinsic proteins stabilize the structure of photosystem II oxygen-evolving complex (OEC), the ion environment of oxygen evolution and protect the OEC against heat-induced inactivation. Low-potential cytochrome c that plays a role in the OEC of PSII. This is Photosystem II extrinsic protein V from Synechococcus sp. (strain CC9311).